Here is a 987-residue protein sequence, read N- to C-terminus: Centrosomal protein of 120 kDa (987 aa).

The region spanning 1–112 (MVSKSDQLLI…QETKQAPKWY (112 aa)) is the C2 1 domain. The segment at 352 to 408 (KTQNEHEPHHSKKRVLTPIKENTHTGPQSPSESPVPPHNQSPPTKDDATESEVESLL) is disordered. The 130-residue stretch at 438 to 567 (SEAASGQKIA…LSSEKTRFLG (130 aa)) folds into the C2 2 domain. The stretch at 670–919 (ENQLKQKELA…RLRQQEQKQY (250 aa)) forms a coiled coil. The segment covering 912–926 (RQQEQKQYPDSREIA) has biased composition (basic and acidic residues). The tract at residues 912 to 937 (RQQEQKQYPDSREIASGKMDGPHGSA) is disordered. Serine 936 is subject to Phosphoserine.

This sequence belongs to the CEP120 family. Interacts with TACC2 and TACC3. Interacts with CCDC52.

The protein resides in the cytoplasm. It localises to the cytoskeleton. Its subcellular location is the microtubule organizing center. The protein localises to the centrosome. Plays a role in the microtubule-dependent coupling of the nucleus and the centrosome. Involved in the processes that regulate centrosome-mediated interkinetic nuclear migration (INM) of neural progenitors and for proper positioning of neurons during brain development. Also implicated in the migration and selfrenewal of neural progenitors. May play a role in centriole duplication during mitosis. Required for the recruitment of CEP295 to the proximal end of new-born centrioles at the centriolar microtubule wall during early S phase in a PLK4-dependent manner. The chain is Centrosomal protein of 120 kDa (CEP120) from Bos taurus (Bovine).